Consider the following 134-residue polypeptide: Probable thionin-2.4 (134 aa).

Positions 1 to 24 (MEGKTLIVSVLIMSLFMAQNQVDA) are cleaved as a signal peptide. Intrachain disulfides connect C27/C64, C28/C56, and C40/C50. Residues 71–134 (DILENTGDAV…KGSMNAVENA (64 aa)) constitute a propeptide, acidic domain.

It belongs to the plant thionin (TC 1.C.44) family.

The protein localises to the secreted. In terms of biological role, thionins are small plant proteins which are toxic to animal cells. They seem to exert their toxic effect at the level of the cell membrane. Their precise function is not known. This Arabidopsis thaliana (Mouse-ear cress) protein is Probable thionin-2.4.